The sequence spans 117 residues: Large ribosomal subunit protein bL20 (117 aa).

It belongs to the bacterial ribosomal protein bL20 family.

Binds directly to 23S ribosomal RNA and is necessary for the in vitro assembly process of the 50S ribosomal subunit. It is not involved in the protein synthesizing functions of that subunit. The chain is Large ribosomal subunit protein bL20 from Actinobacillus pleuropneumoniae serotype 7 (strain AP76).